Reading from the N-terminus, the 685-residue chain is Mannan-binding lectin serine protease 2 (685 aa).

An N-terminal signal peptide occupies residues 1-19 (MRLLIVLGLLWSLVATLLG). A CUB 1 domain is found at 20–137 (SKWPEPVFGR…TGFEAFYAAE (118 aa)). Glutamate 67 and aspartate 75 together coordinate Ca(2+). Cysteine 72 and cysteine 90 are joined by a disulfide. Asparagine 103 carries N-linked (GlcNAc...) asparagine glycosylation. Positions 120, 122, 123, 138, and 139 each coordinate Ca(2+). One can recognise an EGF-like; calcium-binding domain in the interval 138–181 (DVDECRTSLGDSVPCDHYCHNYLGGYYCSCRVGYILHQNKHTCS). Cystine bridges form between cysteine 152–cysteine 165, cysteine 167–cysteine 180, cysteine 184–cysteine 211, and cysteine 241–cysteine 259. (3R)-3-hydroxyasparagine is present on asparagine 158. Residues tyrosine 159 and glycine 162 each coordinate Ca(2+). Positions 184 to 296 (CSGQVFTGRS…TGWKIHYTST (113 aa)) constitute a CUB 2 domain. The N-linked (GlcNAc...) asparagine glycan is linked to asparagine 285. Sushi domains follow at residues 298–363 (QPCP…ECSI) and 364–431 (IDCG…VCKP). 7 disulfide bridges follow: cysteine 300–cysteine 348, cysteine 328–cysteine 361, cysteine 366–cysteine 411, cysteine 396–cysteine 429, cysteine 433–cysteine 551, cysteine 597–cysteine 617, and cysteine 628–cysteine 659. Residues 444 to 683 (IIGGQPAKPG…YIPWIENIIN (240 aa)) form the Peptidase S1 domain. Residues histidine 482 and aspartate 531 each act as charge relay system in the active site. Serine 632 acts as the Charge relay system in catalysis. The N-linked (GlcNAc...) asparagine glycan is linked to asparagine 641.

The protein belongs to the peptidase S1 family. Homodimer; disulfide-linked. Binds MBL2. Isoform 2 binds to MASP1. Binds SERPING1. N-glycosylated. Post-translationally, the iron and 2-oxoglutarate dependent 3-hydroxylation of aspartate and asparagine is (R) stereospecific within EGF domains. In terms of tissue distribution, highly expressed in liver. Secreted in plasma.

The protein localises to the secreted. It carries out the reaction Selective cleavage after Arg-223 in complement component C2 (-Ser-Leu-Gly-Arg-|-Lys-Ile-Gln-Ile) and after Arg-76 in complement component C4 (-Gly-Leu-Gln-Arg-|-Ala-Leu-Glu-Ile).. Its function is as follows. Serum protease that plays an important role in the activation of the complement system via mannose-binding lectin. After activation by auto-catalytic cleavage it cleaves C2 and C4, leading to their activation and to the formation of C3 convertase. The protein is Mannan-binding lectin serine protease 2 (Masp2) of Rattus norvegicus (Rat).